The chain runs to 199 residues: MKQSHFFAHLSRLKLINRWPLMRNVRTENVSEHSLQVAMVAHALAAIKNRKFGGQVNAERIALLAMYHDASEVLTGDLPTPVKYFNSQIAQEYKAIEKIAQQKLVDMVPDELRDIFAPLIDEHAYSEEEKSVVKQADALCAYLKCLEELSAGNNEFLLAKTRLEKTLASRRSEEMDYFMAVFVPSFHLSLDEISQDSPL.

Substrate is bound by residues 18–19 (RW) and His33. The HD domain maps to 30-142 (VSEHSLQVAM…VKQADALCAY (113 aa)). A divalent metal cation contacts are provided by His33, His68, and Asp69. Substrate contacts are provided by residues Asp69, 77–80 (DLPT), and Asp137. Residue Asp137 coordinates a divalent metal cation.

This sequence belongs to the 5DNU family. As to quaternary structure, homodimer. The cofactor is a divalent metal cation.

It is found in the cytoplasm. The enzyme catalyses a 2'-deoxyribonucleoside 5'-phosphate + H2O = a 2'-deoxyribonucleoside + phosphate. Functionally, catalyzes the strictly specific dephosphorylation of 2'-deoxyribonucleoside 5'-monophosphates. The protein is 5'-deoxynucleotidase CKO_00504 of Citrobacter koseri (strain ATCC BAA-895 / CDC 4225-83 / SGSC4696).